We begin with the raw amino-acid sequence, 650 residues long: uncharacterized protein (650 aa).

The protein belongs to the MG032/MG096/MG288 family.

This is an uncharacterized protein from Mycoplasma genitalium (strain ATCC 33530 / DSM 19775 / NCTC 10195 / G37) (Mycoplasmoides genitalium).